A 287-amino-acid chain; its full sequence is Probable F-box protein At5g04010 (287 aa).

Residues 50–101 (PSPPSWEILCLVGPYMDPESLAVASCVSTTWSKCFSSEDLWKSLPATRHSIF) enclose the F-box; degenerate domain.

The polypeptide is Probable F-box protein At5g04010 (NSFBx) (Arabidopsis thaliana (Mouse-ear cress)).